Here is a 197-residue protein sequence, read N- to C-terminus: MNNTVLVTCGATVSFPRLVETVLDRSVTEKLKVLGYGRIVIQYGRGFSDTFLQLVEKHLGLFTEKKSCGIKVLDKIENLKVISVDGIEICGFEFSHDIEKLIANNIDLVISHAGTGSILDSLRVGKKLIVVVNDTLMDNHQQLIADKFEQQKLLWSVHANTEELLRALDRSENEELLKIDNTYNKQFEKLLYNVAID.

It belongs to the glycosyltransferase 28 family. Heterodimer with ALG14 to form a functional enzyme.

The protein resides in the endoplasmic reticulum. The catalysed reaction is an N-acetyl-alpha-D-glucosaminyl-diphospho-di-trans,poly-cis-dolichol + UDP-N-acetyl-alpha-D-glucosamine = an N,N'-diacetylchitobiosyl-diphospho-di-trans,poly-cis-dolichol + UDP + H(+). Its function is as follows. Involved in protein N-glycosylation. Essential for the second step of the dolichol-linked oligosaccharide pathway. The polypeptide is UDP-N-acetylglucosamine transferase subunit ALG13 (ALG13) (Kluyveromyces lactis (strain ATCC 8585 / CBS 2359 / DSM 70799 / NBRC 1267 / NRRL Y-1140 / WM37) (Yeast)).